Here is a 161-residue protein sequence, read N- to C-terminus: Regulator of ribonuclease activity A (161 aa).

This sequence belongs to the RraA family. Homotrimer. Binds to both RNA-binding sites in the C-terminal region of Rne and to RhlB.

It is found in the cytoplasm. Globally modulates RNA abundance by binding to RNase E (Rne) and regulating its endonucleolytic activity. Can modulate Rne action in a substrate-dependent manner by altering the composition of the degradosome. Modulates RNA-binding and helicase activities of the degradosome. This chain is Regulator of ribonuclease activity A, found in Escherichia fergusonii (strain ATCC 35469 / DSM 13698 / CCUG 18766 / IAM 14443 / JCM 21226 / LMG 7866 / NBRC 102419 / NCTC 12128 / CDC 0568-73).